The following is a 475-amino-acid chain: Neuronal acetylcholine receptor subunit alpha-5 (475 aa).

A signal peptide spans 1–29; it reads MAAPGWGRWVLGLGPLLLQVFLPFQLVAG. Over 30–261 the chain is Extracellular; that stretch reads RWGPEGAGGG…VIKRLPLFYT (232 aa). C177 and C191 are oxidised to a cystine. Residues N190 and N236 are each glycosylated (N-linked (GlcNAc...) asparagine). A disulfide bridge connects residues C241 and C242. 3 helical membrane passes run 262–282, 289–309, and 324–344; these read LFLI…FYLP, ICLC…IEEI, and LVFT…AINI. The Cytoplasmic segment spans residues 345 to 437; the sequence is HHRSSSTHDA…KFIAQVLDRM (93 aa). A helical membrane pass occupies residues 438–458; the sequence is FLWTFLLVSVVGSLGLFVPVI. The Extracellular segment spans residues 459-475; it reads YKWANIIVPIHIGNENK.

The protein belongs to the ligand-gated ion channel (TC 1.A.9) family. Acetylcholine receptor (TC 1.A.9.1) subfamily. Alpha-5/CHRNA5 sub-subfamily. Neuronal AChR that forms heteropentamers composed of two different type of subunits: alpha and non-alpha (beta). CHRNA5/alpha-5 subunit is only able to form functional nAChRs when co-assembled with another alpha subunit, can be combined to CHRNA4/alpha-4 or CHRNA3/alpha-3 and CHRNB4/beta-4 or CHRNB2/beta-2 to give rise to functional receptors. Interacts with LYPD6.

It is found in the synaptic cell membrane. Its subcellular location is the cell membrane. The enzyme catalyses Ca(2+)(in) = Ca(2+)(out). It catalyses the reaction K(+)(in) = K(+)(out). The catalysed reaction is Na(+)(in) = Na(+)(out). Activated by a myriad of ligands such as acetylcholine, cytisine, nicotine, choline and epibatidine. Component of neuronal acetylcholine receptors (nAChRs) that function as pentameric, ligand-gated cation channels with high calcium permeability among other activities. nAChRs are excitatory neurotrasnmitter receptors formed by a collection of nAChR subunits known to mediate synaptic transmission in the nervous system and the neuromuscular junction. Each nAchR subunit confers differential attributes to channel properties, including activation, deactivation and desensitization kinetics, pH sensitivity, cation permeability, and binding to allosteric modulators. Has an accessory rather than functional role and is only able to form functional nAChRs when co-assembled with another beta subunit. Participates in pentameric assemblies along with CHRNA3, CHRNA4, CHRNB2 and CHRNB4. Increases receptor sensitivity to acetylcholine and nicotine when associated with CHRNA4 and CHRNB2. Plays a role in nicotine addiction. In Bos taurus (Bovine), this protein is Neuronal acetylcholine receptor subunit alpha-5 (CHRNA5).